Reading from the N-terminus, the 134-residue chain is Small ribosomal subunit protein uS8c (134 aa).

This sequence belongs to the universal ribosomal protein uS8 family. Part of the 30S ribosomal subunit.

It is found in the plastid. It localises to the chloroplast. In terms of biological role, one of the primary rRNA binding proteins, it binds directly to 16S rRNA central domain where it helps coordinate assembly of the platform of the 30S subunit. The chain is Small ribosomal subunit protein uS8c (rps8) from Phaseolus vulgaris (Kidney bean).